The chain runs to 171 residues: dCTP pyrophosphatase (171 aa).

It carries out the reaction dCTP + H2O = dCMP + diphosphate + H(+). This is dCTP pyrophosphatase (56) from Enterobacteria phage T4 (Bacteriophage T4).